The primary structure comprises 119 residues: Putative ankyrin repeat domain-containing protein 26-like 1 (119 aa).

Positions 15–112 (EKEEDLLHKN…EKQSRQRLTK (98 aa)) form a coiled coil.

This Homo sapiens (Human) protein is Putative ankyrin repeat domain-containing protein 26-like 1 (ANKRD36BP1).